The primary structure comprises 245 residues: Ribonuclease 3 (245 aa).

The RNase III domain occupies 24–146 (YAVFLQKLGY…IIGAIYLESG (123 aa)). Glutamate 59 provides a ligand contact to Mg(2+). Residue aspartate 63 is part of the active site. 2 residues coordinate Mg(2+): asparagine 132 and glutamate 135. The active site involves glutamate 135. The DRBM domain occupies 173–243 (DSKTLLQEYL…ARQAYELAIV (71 aa)).

It belongs to the ribonuclease III family. As to quaternary structure, homodimer. The cofactor is Mg(2+).

The protein localises to the cytoplasm. It carries out the reaction Endonucleolytic cleavage to 5'-phosphomonoester.. Functionally, digests double-stranded RNA. Involved in the processing of primary rRNA transcript to yield the immediate precursors to the large and small rRNAs (23S and 16S). Processes some mRNAs, and tRNAs when they are encoded in the rRNA operon. Processes pre-crRNA and tracrRNA of type II CRISPR loci if present in the organism. This is Ribonuclease 3 from Nitrosomonas europaea (strain ATCC 19718 / CIP 103999 / KCTC 2705 / NBRC 14298).